A 476-amino-acid polypeptide reads, in one-letter code: Tubulointerstitial nephritis antigen (476 aa).

The N-linked (GlcNAc...) asparagine glycan is linked to N38. Residues 59–107 (RFGCCADRDDGCVTQFYEADALCYCDKFCERENSDCCPDYKSFCREEKG) enclose the SMB domain. 2 cysteine pairs are disulfide-bonded: C63-C83 and C87-C94. N175, N314, N360, and N455 each carry an N-linked (GlcNAc...) asparagine glycan.

This sequence belongs to the peptidase C1 family.

It is found in the secreted. It localises to the extracellular space. The protein resides in the extracellular matrix. The protein localises to the basement membrane. In terms of biological role, mediates adhesion of proximal tubule epithelial cells via integrins alpha3-beta1 and alphaV-beta3. This is a non catalytic peptidase C1 family protein. This is Tubulointerstitial nephritis antigen (TINAG) from Bos taurus (Bovine).